We begin with the raw amino-acid sequence, 292 residues long: uncharacterized protein (292 aa).

Lysine 8 participates in a covalent cross-link: Glycyl lysine isopeptide (Lys-Gly) (interchain with G-Cter in SUMO2). Residues 47–67 (TKRKMLPSSSSRMRSDGFDEE) are disordered. Residue lysine 76 forms a Glycyl lysine isopeptide (Lys-Gly) (interchain with G-Cter in SUMO2) linkage. The residue at position 94 (asparagine 94) is a Phosphothreonine. A phosphoserine mark is found at lysine 96 and phenylalanine 97. Residues 122 to 292 (ETDSDQQDIT…ERSAESSEDD (171 aa)) form a disordered region. Residue threonine 123 is modified to Phosphothreonine. 2 positions are modified to phosphoserine: serine 125 and aspartate 126. A compositionally biased stretch (polar residues) spans 128 to 140 (QDITNGKKTSPQV). The segment covering 147–173 (SRKHKKSKKSHKKKQKKRSHKKQKKSK) has biased composition (basic residues). The segment covering 180 to 194 (TADSSSEFSEETGAS) has biased composition (polar residues). Composition is skewed to basic residues over residues 197–215 (RKGK…KSLK) and 247–259 (KKTK…KKAH). Over residues 280–292 (ATDERSAESSEDD) the composition is skewed to basic and acidic residues.

This is an uncharacterized protein from Homo sapiens (Human).